A 252-amino-acid polypeptide reads, in one-letter code: 1-(5-phosphoribosyl)-5-[(5-phosphoribosylamino)methylideneamino] imidazole-4-carboxamide isomerase (252 aa).

Asp-8 acts as the Proton acceptor in catalysis. The Proton donor role is filled by Asp-129.

The protein belongs to the HisA/HisF family.

Its subcellular location is the cytoplasm. The enzyme catalyses 1-(5-phospho-beta-D-ribosyl)-5-[(5-phospho-beta-D-ribosylamino)methylideneamino]imidazole-4-carboxamide = 5-[(5-phospho-1-deoxy-D-ribulos-1-ylimino)methylamino]-1-(5-phospho-beta-D-ribosyl)imidazole-4-carboxamide. It participates in amino-acid biosynthesis; L-histidine biosynthesis; L-histidine from 5-phospho-alpha-D-ribose 1-diphosphate: step 4/9. This Synechococcus sp. (strain RCC307) protein is 1-(5-phosphoribosyl)-5-[(5-phosphoribosylamino)methylideneamino] imidazole-4-carboxamide isomerase.